A 200-amino-acid chain; its full sequence is Probable nicotinate-nucleotide adenylyltransferase (200 aa).

It belongs to the NadD family.

The catalysed reaction is nicotinate beta-D-ribonucleotide + ATP + H(+) = deamido-NAD(+) + diphosphate. The protein operates within cofactor biosynthesis; NAD(+) biosynthesis; deamido-NAD(+) from nicotinate D-ribonucleotide: step 1/1. Catalyzes the reversible adenylation of nicotinate mononucleotide (NaMN) to nicotinic acid adenine dinucleotide (NaAD). This chain is Probable nicotinate-nucleotide adenylyltransferase, found in Clostridium botulinum (strain Eklund 17B / Type B).